We begin with the raw amino-acid sequence, 373 residues long: Glycerol-3-phosphate dehydrogenase [NAD(+)] 2 (373 aa).

At serine 15 the chain carries Phosphoserine. NAD(+) contacts are provided by residues 31 to 36, phenylalanine 123, lysine 146, and alanine 179; that span reads GSGNWG. Residue lysine 146 participates in substrate binding. Lysine 236 (proton acceptor) is an active-site residue. NAD(+)-binding residues include arginine 300 and glutamine 329. 300–301 contributes to the substrate binding site; that stretch reads RN.

Belongs to the NAD-dependent glycerol-3-phosphate dehydrogenase family.

The protein localises to the cytoplasm. The catalysed reaction is sn-glycerol 3-phosphate + NAD(+) = dihydroxyacetone phosphate + NADH + H(+). The sequence is that of Glycerol-3-phosphate dehydrogenase [NAD(+)] 2 (gpd2) from Schizosaccharomyces pombe (strain 972 / ATCC 24843) (Fission yeast).